The chain runs to 152 residues: MKIESTRFGTLEVTSEQIIRFPHGIPGFLDEKAFVHLPHDENSPFSFLQSTAEADLSFLLVEPFSFIPEYEFVLGDEMAGELELSEENPPQVFLIGTVREKITDMTVNLLAPIVVNRNKGIGRQIILDKTEYSIRHKLFPEAQAQGTPEGGE.

Belongs to the FliW family. Interacts with translational regulator CsrA and flagellin(s).

Its subcellular location is the cytoplasm. Acts as an anti-CsrA protein, binds CsrA and prevents it from repressing translation of its target genes, one of which is flagellin. Binds to flagellin and participates in the assembly of the flagellum. In Desulfitobacterium hafniense (strain DSM 10664 / DCB-2), this protein is Flagellar assembly factor FliW.